A 266-amino-acid polypeptide reads, in one-letter code: GTP cyclohydrolase III (266 aa).

The protein belongs to the archaeal-type GTP cyclohydrolase family.

The enzyme catalyses GTP + 3 H2O = 2-amino-5-formylamino-6-(5-phospho-D-ribosylamino)pyrimidin-4(3H)-one + 2 phosphate + 2 H(+). Catalyzes the formation of 2-amino-5-formylamino-6-ribofuranosylamino-4(3H)-pyrimidinone ribonucleotide monophosphate and inorganic phosphate from GTP. Also has an independent pyrophosphate phosphohydrolase activity. The protein is GTP cyclohydrolase III of Methanococcus maripaludis (strain DSM 14266 / JCM 13030 / NBRC 101832 / S2 / LL).